The sequence spans 91 residues: Small ribosomal subunit protein uS15 (91 aa).

It belongs to the universal ribosomal protein uS15 family. In terms of assembly, part of the 30S ribosomal subunit. Forms a bridge to the 50S subunit in the 70S ribosome, contacting the 23S rRNA.

Functionally, one of the primary rRNA binding proteins, it binds directly to 16S rRNA where it helps nucleate assembly of the platform of the 30S subunit by binding and bridging several RNA helices of the 16S rRNA. In terms of biological role, forms an intersubunit bridge (bridge B4) with the 23S rRNA of the 50S subunit in the ribosome. The polypeptide is Small ribosomal subunit protein uS15 (Legionella pneumophila (strain Paris)).